Here is a 336-residue protein sequence, read N- to C-terminus: tRNA N6-adenosine threonylcarbamoyltransferase (336 aa).

Fe cation is bound by residues histidine 111 and histidine 115. Substrate is bound by residues 134–138 (LVSGG), aspartate 167, glycine 180, and asparagine 270. Aspartate 298 contacts Fe cation.

Belongs to the KAE1 / TsaD family. Fe(2+) is required as a cofactor.

The protein resides in the cytoplasm. The catalysed reaction is L-threonylcarbamoyladenylate + adenosine(37) in tRNA = N(6)-L-threonylcarbamoyladenosine(37) in tRNA + AMP + H(+). Functionally, required for the formation of a threonylcarbamoyl group on adenosine at position 37 (t(6)A37) in tRNAs that read codons beginning with adenine. Is involved in the transfer of the threonylcarbamoyl moiety of threonylcarbamoyl-AMP (TC-AMP) to the N6 group of A37, together with TsaE and TsaB. TsaD likely plays a direct catalytic role in this reaction. This is tRNA N6-adenosine threonylcarbamoyltransferase from Acinetobacter baumannii (strain SDF).